The following is a 241-amino-acid chain: Cytochrome b6-f complex iron-sulfur subunit 2, cyanelle (241 aa).

The N-terminal 62 residues, methionine 1–serine 62, are a transit peptide targeting the cyanelle. The chain crosses the membrane as a helical span at residues leucine 83–valine 103. The Rieske domain occupies valine 127 to alanine 223. Residues cysteine 169, histidine 171, cysteine 187, and histidine 190 each contribute to the [2Fe-2S] cluster site. A disulfide bridge connects residues cysteine 174 and cysteine 189.

The protein belongs to the Rieske iron-sulfur protein family. In terms of assembly, the 4 large subunits of the cytochrome b6-f complex are cytochrome b6, subunit IV (17 kDa polypeptide, petD), cytochrome f and the Rieske protein, while the 4 small subunits are petG, petL, petM and petN. The complex functions as a dimer. It depends on [2Fe-2S] cluster as a cofactor.

The protein resides in the plastid. It is found in the cyanelle thylakoid membrane. The enzyme catalyses 2 oxidized [plastocyanin] + a plastoquinol + 2 H(+)(in) = 2 reduced [plastocyanin] + a plastoquinone + 4 H(+)(out). Its function is as follows. Component of the cytochrome b6-f complex, which mediates electron transfer between photosystem II (PSII) and photosystem I (PSI), cyclic electron flow around PSI, and state transitions. The sequence is that of Cytochrome b6-f complex iron-sulfur subunit 2, cyanelle (petC-2) from Cyanophora paradoxa.